The sequence spans 374 residues: Speckle-type POZ protein (374 aa).

An MATH domain is found at 31–161; it reads KFSYMWTINN…DDKLTLFCEV (131 aa). The required for nuclear localization stretch occupies residues 71 to 191; sequence VNPKGLDEES…PDCRLADELG (121 aa). One can recognise a BTB domain in the interval 173–297; that stretch reads QNTMNMVKVP…MCEDALCTSL (125 aa). The segment at 297–355 is homodimerization; that stretch reads LSVENAAEILILADLHSADQLKTQAVDFINYHASDVMETSGWKSMVASHPHLVAEAYRS.

It belongs to the Tdpoz family. In terms of assembly, homodimer. Part of cullin-RING-based BCR (BTB-CUL3-RBX1) E3 ubiquitin-protein ligase complexes that contain CUL3 and SPOP, plus a target protein.

It localises to the nucleus. Its subcellular location is the nucleus speckle. It participates in protein modification; protein ubiquitination. Its function is as follows. Component of a cullin-RING-based BCR (BTB-CUL3-RBX1) E3 ubiquitin-protein ligase complex that mediates the ubiquitination of target proteins, leading most often to their proteasomal degradation. The chain is Speckle-type POZ protein (spop) from Danio rerio (Zebrafish).